The following is a 207-amino-acid chain: Cytochrome c biogenesis ATP-binding export protein CcmA (207 aa).

Positions 6–207 (LCAEGLECIR…RGDCRSLNLS (202 aa)) constitute an ABC transporter domain. Position 38 to 45 (38 to 45 (GANGAGKT)) interacts with ATP.

Belongs to the ABC transporter superfamily. CcmA exporter (TC 3.A.1.107) family. The complex is composed of two ATP-binding proteins (CcmA) and two transmembrane proteins (CcmB).

The protein localises to the cell inner membrane. It carries out the reaction heme b(in) + ATP + H2O = heme b(out) + ADP + phosphate + H(+). Its function is as follows. Part of the ABC transporter complex CcmAB involved in the biogenesis of c-type cytochromes; once thought to export heme, this seems not to be the case, but its exact role is uncertain. Responsible for energy coupling to the transport system. The sequence is that of Cytochrome c biogenesis ATP-binding export protein CcmA from Methylococcus capsulatus (strain ATCC 33009 / NCIMB 11132 / Bath).